The following is a 491-amino-acid chain: Cholesterol 22-monohydroxylase CYP90B51 (491 aa).

The chain crosses the membrane as a helical span at residues 6–26 (ITFYCLSSILSVLLIFIFILI). Cys-437 lines the heme pocket.

It belongs to the cytochrome P450 family. Mainly expressed in leaves and seed pods and, to a lower extent, in flowers and stems.

The protein localises to the membrane. The catalysed reaction is cholesterol + reduced [NADPH--hemoprotein reductase] + O2 = (22S)-22-hydroxycholesterol + oxidized [NADPH--hemoprotein reductase] + H2O + H(+). It participates in steroid metabolism; cholesterol metabolism. In terms of biological role, canonical brassinosteroid (BR)-biosynthetic enzyme capable of converting cholesterol to 22S-hydroxycholesterol via sterol-C22 hydroxylation. In Trigonella foenum-graecum (Fenugreek), this protein is Cholesterol 22-monohydroxylase CYP90B51.